We begin with the raw amino-acid sequence, 118 residues long: Immunoglobulin heavy variable 4-30-2 (118 aa).

Positions 1 to 19 (MKHLWFFLLLVAAPRWVLS) are cleaved as a signal peptide. The interval 20 to 44 (QLQLQESGSGLVKPSQTLSLTCAVS) is framework-1. One can recognise an Ig-like domain in the interval 20 to 118 (QLQLQESGSG…ADTAVYYCAR (99 aa)). Residues cysteine 41 and cysteine 116 are joined by a disulfide bond. Residues 45–54 (GGSISSGGYS) form a complementarity-determining-1 region. The segment at 55 to 71 (WSWIRQPPGKGLEWIGY) is framework-2. A complementarity-determining-2 region spans residues 72–78 (IYHSGST). The tract at residues 79 to 116 (YYNPSLKSRVTISVDRSKNQFSLKLSSVTAADTAVYYC) is framework-3. Positions 117-118 (AR) are complementarity-determining-3.

Immunoglobulins are composed of two identical heavy chains and two identical light chains; disulfide-linked.

The protein localises to the secreted. It localises to the cell membrane. Its function is as follows. V region of the variable domain of immunoglobulin heavy chains that participates in the antigen recognition. Immunoglobulins, also known as antibodies, are membrane-bound or secreted glycoproteins produced by B lymphocytes. In the recognition phase of humoral immunity, the membrane-bound immunoglobulins serve as receptors which, upon binding of a specific antigen, trigger the clonal expansion and differentiation of B lymphocytes into immunoglobulins-secreting plasma cells. Secreted immunoglobulins mediate the effector phase of humoral immunity, which results in the elimination of bound antigens. The antigen binding site is formed by the variable domain of one heavy chain, together with that of its associated light chain. Thus, each immunoglobulin has two antigen binding sites with remarkable affinity for a particular antigen. The variable domains are assembled by a process called V-(D)-J rearrangement and can then be subjected to somatic hypermutations which, after exposure to antigen and selection, allow affinity maturation for a particular antigen. The protein is Immunoglobulin heavy variable 4-30-2 of Homo sapiens (Human).